A 195-amino-acid chain; its full sequence is ATP-dependent Clp protease proteolytic subunit (195 aa).

The active-site Nucleophile is Ser-98. His-123 is an active-site residue.

Belongs to the peptidase S14 family. As to quaternary structure, fourteen ClpP subunits assemble into 2 heptameric rings which stack back to back to give a disk-like structure with a central cavity, resembling the structure of eukaryotic proteasomes.

The protein localises to the cytoplasm. The catalysed reaction is Hydrolysis of proteins to small peptides in the presence of ATP and magnesium. alpha-casein is the usual test substrate. In the absence of ATP, only oligopeptides shorter than five residues are hydrolyzed (such as succinyl-Leu-Tyr-|-NHMec, and Leu-Tyr-Leu-|-Tyr-Trp, in which cleavage of the -Tyr-|-Leu- and -Tyr-|-Trp bonds also occurs).. In terms of biological role, cleaves peptides in various proteins in a process that requires ATP hydrolysis. Has a chymotrypsin-like activity. Plays a major role in the degradation of misfolded proteins. The protein is ATP-dependent Clp protease proteolytic subunit of Helicobacter pylori (strain J99 / ATCC 700824) (Campylobacter pylori J99).